The sequence spans 151 residues: MAARREPSSDDESYEVLDLTEYARRHHWWNRLFGRNSGPLTEKYSVATQIVMGGVSGWCAGFLFQKVGKLAATAVGGGFLLLQIASHGGYIQIDWKRVEKDVNKAKRKIKKEANKSVPEINTLIEESTDFIKKNIVVSGGFVGGFLLGLAS.

A YXXL motif is present at residues 14–17 (YEVL). The next 3 membrane-spanning stretches (helical) occupy residues 44–64 (YSVATQIVMGGVSGWCAGFLF), 71–91 (AATAVGGGFLLLQIASHGGYI), and 130–150 (FIKKNIVVSGGFVGGFLLGLA).

It belongs to the FUN14 family.

It is found in the mitochondrion outer membrane. In terms of biological role, acts as an activator of hypoxia-induced mitophagy, an important mechanism for mitochondrial quality control. The protein is FUN14 domain-containing protein 1 (fundc1) of Xenopus tropicalis (Western clawed frog).